Reading from the N-terminus, the 156-residue chain is Small ribosomal subunit protein uS7 (156 aa).

It belongs to the universal ribosomal protein uS7 family. In terms of assembly, part of the 30S ribosomal subunit. Contacts proteins S9 and S11.

Its function is as follows. One of the primary rRNA binding proteins, it binds directly to 16S rRNA where it nucleates assembly of the head domain of the 30S subunit. Is located at the subunit interface close to the decoding center, probably blocks exit of the E-site tRNA. In Acinetobacter baumannii (strain AB307-0294), this protein is Small ribosomal subunit protein uS7.